Consider the following 212-residue polypeptide: Adenylate kinase (212 aa).

10 to 15 (GAGKGT) is a binding site for ATP. The NMP stretch occupies residues 30–59 (STGDMFRAAMANQTEMGRLAKSYIDKGELV). AMP is bound by residues T31, R36, 57–59 (ELV), 86–89 (GYPR), and Q93. The LID stretch occupies residues 127 to 159 (GRIINRKTGETFHKVFNPPVDYKEEDYYQREDD). Residues R128 and 137–138 (TF) contribute to the ATP site. Positions 156 and 167 each coordinate AMP. Position 195 (Q195) interacts with ATP.

Belongs to the adenylate kinase family. Monomer.

It is found in the cytoplasm. It carries out the reaction AMP + ATP = 2 ADP. It functions in the pathway purine metabolism; AMP biosynthesis via salvage pathway; AMP from ADP: step 1/1. Functionally, catalyzes the reversible transfer of the terminal phosphate group between ATP and AMP. Plays an important role in cellular energy homeostasis and in adenine nucleotide metabolism. The protein is Adenylate kinase of Streptococcus pyogenes serotype M1.